The following is a 194-amino-acid chain: Small COPII coat GTPase SAR1B (194 aa).

Positions phenylalanine 2 to valine 4 match the STAR; SAR1-N-terminal activation recruitment. Required for the activation and subsequent recruitment to ER membrane motif. The mediates recruitment to ER membranes stretch occupies residues methionine 10–leucine 14. Positions 30, 31, 32, 33, 34, and 35 each coordinate GDP. Asparagine 30 is a GTP binding site. The GTP site is built by glycine 32, lysine 33, threonine 34, and threonine 35. A Mg(2+)-binding site is contributed by aspartate 70. GDP is bound by residues lysine 131, aspartate 133, and isoleucine 172. Positions 131, 133, and 172 each coordinate GTP.

Belongs to the small GTPase superfamily. SAR1 family. Homodimer; upon association with membrane. Part of the coat protein complex II/COPII, composed of SEC23/24 and SEC13/31 heterodimers, that it helps recruit and assemble on endoplasmic reticulum (ER) membranes at ER exit sites.

The protein resides in the endoplasmic reticulum membrane. The protein localises to the golgi apparatus. It localises to the golgi stack membrane. It is found in the cytoplasm. Its subcellular location is the cytosol. It carries out the reaction GTP + H2O = GDP + phosphate + H(+). Small GTPases activation is mediated by guanine exchange factors (GEF), while inactivation through hydrolysis of the bound GTP is stimulated by GTPase activating proteins (GAP). In terms of biological role, small GTPase that cycles between an active GTP-bound and an inactive GDP-bound state and mainly functions in vesicle-mediated endoplasmic reticulum (ER) to Golgi transport. The active GTP-bound form inserts into the endoplasmic reticulum membrane where it recruits the remainder of the coat protein complex II/COPII. The coat protein complex II assembling and polymerizing on endoplasmic reticulum membrane is responsible for both the sorting of cargos and the deformation and budding of membranes into vesicles destined to the Golgi. This chain is Small COPII coat GTPase SAR1B (sarB), found in Dictyostelium discoideum (Social amoeba).